We begin with the raw amino-acid sequence, 363 residues long: Peptide chain release factor 1 (363 aa).

An N5-methylglutamine modification is found at Gln237. Residues 284 to 296 (EDEKRRSAEESTR) are compositionally biased toward basic and acidic residues. Residues 284–305 (EDEKRRSAEESTRRSLVASGDR) form a disordered region.

This sequence belongs to the prokaryotic/mitochondrial release factor family. Post-translationally, methylated by PrmC. Methylation increases the termination efficiency of RF1.

The protein resides in the cytoplasm. Peptide chain release factor 1 directs the termination of translation in response to the peptide chain termination codons UAG and UAA. The chain is Peptide chain release factor 1 from Shewanella baltica (strain OS185).